The sequence spans 151 residues: Small ribosomal subunit protein uS15 (151 aa).

A compositionally biased stretch (basic residues) spans 1 to 11 (MPHRSRHKKGR). Residues 1–24 (MPHRSRHKKGRSSSVRPPHPTVPT) form a disordered region.

This sequence belongs to the universal ribosomal protein uS15 family. As to quaternary structure, part of the 30S ribosomal subunit.

The polypeptide is Small ribosomal subunit protein uS15 (Pyrobaculum calidifontis (strain DSM 21063 / JCM 11548 / VA1)).